We begin with the raw amino-acid sequence, 302 residues long: Uricase (302 aa).

Catalysis depends on charge relay system residues K22 and T67. Residues T67, D68, F163, R180, Q223, and N249 each contribute to the urate site. H251 functions as the Charge relay system in the catalytic mechanism.

It belongs to the uricase family. As to quaternary structure, homotetramer.

The catalysed reaction is urate + O2 + H2O = 5-hydroxyisourate + H2O2. Its pathway is purine metabolism; urate degradation; (S)-allantoin from urate: step 1/3. Its function is as follows. Catalyzes the oxidation of uric acid to 5-hydroxyisourate, which is further processed to form (S)-allantoin. The polypeptide is Uricase (uox) (Arthrobacter globiformis).